We begin with the raw amino-acid sequence, 629 residues long: MTAEGPSPPARWHRRLPGLWAAALLLLGLPRLSVRADGKFFVLESQNGSQGLQLEAARLSCKSRGAHLASADELRRVVQDCSFAVCTTGWLADGTLGTTVCSKGSGEQQIMRAVDVRIESNPVPGGTYSALCIKDEEKPCGDPPSFPHTILQGRTGLEMGDELLYVCAPGHIMGHRETAFTLLCNSCGEWYGLVQACGKDEAEAHIDYEDNFPDDRSVSFRELMEDSRTEADEDRGQGDSSEEAPKQDRLVSISVGRENIARDKVFVPTTGLPGAGSSVPADSPGSRLLQKHLFWFPAEAFHKPGLEKEVDDDTKKQFSAGDNHSGVKLVPGEPETKVIYGNTDGPSGPFVGKNDSKAGDPVVSSSDESWLDGYPVTEGAWRKTEAEEEEDGDRGDGSVGLDENVLVTPDQPILVEVKKPKSSTLTPSEGMTHSSVLPSQMLDVEALALRPVNASETEGIGDGDLTKYQSTLPWRFITEESPMATLSYELTSSTLEILTVNTVKQTPNHIPSTIMATTQPPVETTVPEIQDSFPYLLSEDFFGQEGPGPGASEELHPTLESCVGDGCPGLSRGPVIATIVTVLCLLLLLAGVGMVWGYRKCQHKSSVYKLNVGQRQARHYHQQIEMEKV.

Positions 1–35 are cleaved as a signal peptide; sequence MTAEGPSPPARWHRRLPGLWAAALLLLGLPRLSVR. The Extracellular portion of the chain corresponds to 36–574; that stretch reads ADGKFFVLES…DGCPGLSRGP (539 aa). The Link domain occupies 39 to 134; that stretch reads KFFVLESQNG…GGTYSALCIK (96 aa). Cystine bridges form between cysteine 61-cysteine 132, cysteine 140-cysteine 184, and cysteine 167-cysteine 197. In terms of domain architecture, Sushi spans 138-199; sequence KPCGDPPSFP…WYGLVQACGK (62 aa). The segment covering 225–249 has biased composition (basic and acidic residues); the sequence is EDSRTEADEDRGQGDSSEEAPKQDR. Disordered regions lie at residues 225-252 and 344-403; these read EDSRTEADEDRGQGDSSEEAPKQDRLVS and DGPS…GLDE. Residues 575 to 595 traverse the membrane as a helical segment; sequence VIATIVTVLCLLLLLAGVGMV. At 596–629 the chain is on the cytoplasmic side; that stretch reads WGYRKCQHKSSVYKLNVGQRQARHYHQQIEMEKV.

It localises to the membrane. This is Sushi domain-containing protein 5 (SUSD5) from Homo sapiens (Human).